We begin with the raw amino-acid sequence, 358 residues long: 3-isopropylmalate dehydrogenase (358 aa).

Residue 75–88 (GPKWETLPPEKQPE) coordinates NAD(+). Substrate-binding residues include arginine 96, arginine 106, arginine 135, and aspartate 225. Residues aspartate 225, aspartate 249, and aspartate 253 each coordinate Mg(2+). 283-295 (GSAPDIAGKGVAN) contributes to the NAD(+) binding site.

Belongs to the isocitrate and isopropylmalate dehydrogenases family. LeuB type 1 subfamily. Homodimer. It depends on Mg(2+) as a cofactor. Requires Mn(2+) as cofactor.

The protein resides in the cytoplasm. The enzyme catalyses (2R,3S)-3-isopropylmalate + NAD(+) = 4-methyl-2-oxopentanoate + CO2 + NADH. The protein operates within amino-acid biosynthesis; L-leucine biosynthesis; L-leucine from 3-methyl-2-oxobutanoate: step 3/4. In terms of biological role, catalyzes the oxidation of 3-carboxy-2-hydroxy-4-methylpentanoate (3-isopropylmalate) to 3-carboxy-4-methyl-2-oxopentanoate. The product decarboxylates to 4-methyl-2 oxopentanoate. The sequence is that of 3-isopropylmalate dehydrogenase from Leptospira interrogans serogroup Icterohaemorrhagiae serovar copenhageni (strain Fiocruz L1-130).